We begin with the raw amino-acid sequence, 388 residues long: 4-hydroxy-3-methylbut-2-en-1-yl diphosphate synthase (flavodoxin) (388 aa).

The [4Fe-4S] cluster site is built by Cys-281, Cys-284, Cys-316, and Glu-323.

It belongs to the IspG family. It depends on [4Fe-4S] cluster as a cofactor.

The enzyme catalyses (2E)-4-hydroxy-3-methylbut-2-enyl diphosphate + oxidized [flavodoxin] + H2O + 2 H(+) = 2-C-methyl-D-erythritol 2,4-cyclic diphosphate + reduced [flavodoxin]. It functions in the pathway isoprenoid biosynthesis; isopentenyl diphosphate biosynthesis via DXP pathway; isopentenyl diphosphate from 1-deoxy-D-xylulose 5-phosphate: step 5/6. Converts 2C-methyl-D-erythritol 2,4-cyclodiphosphate (ME-2,4cPP) into 1-hydroxy-2-methyl-2-(E)-butenyl 4-diphosphate. The sequence is that of 4-hydroxy-3-methylbut-2-en-1-yl diphosphate synthase (flavodoxin) from Paenarthrobacter aurescens (strain TC1).